The primary structure comprises 466 residues: Argininosuccinate lyase (466 aa).

It belongs to the lyase 1 family. Argininosuccinate lyase subfamily.

Its subcellular location is the cytoplasm. It catalyses the reaction 2-(N(omega)-L-arginino)succinate = fumarate + L-arginine. The protein operates within amino-acid biosynthesis; L-arginine biosynthesis; L-arginine from L-ornithine and carbamoyl phosphate: step 3/3. The sequence is that of Argininosuccinate lyase from Synechococcus elongatus (strain ATCC 33912 / PCC 7942 / FACHB-805) (Anacystis nidulans R2).